Here is a 1407-residue protein sequence, read N- to C-terminus: DNA-directed RNA polymerase subunit beta' (1407 aa).

4 residues coordinate Zn(2+): C70, C72, C85, and C88. Mg(2+)-binding residues include D458, D460, and D462. Zn(2+)-binding residues include C814, C888, C895, and C898.

Belongs to the RNA polymerase beta' chain family. The RNAP catalytic core consists of 2 alpha, 1 beta, 1 beta' and 1 omega subunit. When a sigma factor is associated with the core the holoenzyme is formed, which can initiate transcription. The cofactor is Mg(2+). Requires Zn(2+) as cofactor.

It catalyses the reaction RNA(n) + a ribonucleoside 5'-triphosphate = RNA(n+1) + diphosphate. Functionally, DNA-dependent RNA polymerase catalyzes the transcription of DNA into RNA using the four ribonucleoside triphosphates as substrates. The chain is DNA-directed RNA polymerase subunit beta' from Leptothrix cholodnii (strain ATCC 51168 / LMG 8142 / SP-6) (Leptothrix discophora (strain SP-6)).